Reading from the N-terminus, the 963-residue chain is Kinesin-1 heavy chain (963 aa).

Position 2 is an N-acetylalanine (alanine 2). Residues asparagine 8 to isoleucine 325 form the Kinesin motor domain. Position 85–92 (glycine 85–threonine 92) interacts with ATP. Lysine 213 is covalently cross-linked (Glycyl lysine isopeptide (Lys-Gly) (interchain with G-Cter in SUMO2)). Residues valine 329–arginine 914 adopt a coiled-coil conformation. Positions serine 908 to valine 963 are disordered. Positions glycine 915–valine 963 are globular. Position 933 is a phosphoserine (serine 933). Arginine 956 carries the post-translational modification Omega-N-methylarginine.

The protein belongs to the TRAFAC class myosin-kinesin ATPase superfamily. Kinesin family. Kinesin subfamily. In terms of assembly, oligomer composed of two heavy chains and two light chains. Interacts with GRIP1 and PPP1R42. Interacts with SYBU. Interacts with JAKMIP1. Interacts with PLEKHM2. Interacts with ECPAS. Interacts with ZFYVE27. Found in a complex with OGT, RHOT1, RHOT2 and TRAK1. Interacts with APP (via cytoplasmic domain).

It localises to the cytoplasm. It is found in the cytoskeleton. Its subcellular location is the cytolytic granule membrane. The protein resides in the lysosome membrane. Functionally, microtubule-dependent motor required for normal distribution of mitochondria and lysosomes. Can induce formation of neurite-like membrane protrusions in non-neuronal cells in a ZFYVE27-dependent manner. Regulates centrosome and nuclear positioning during mitotic entry. During the G2 phase of the cell cycle in a BICD2-dependent manner, antagonizes dynein function and drives the separation of nuclei and centrosomes. Required for anterograde axonal transportation of MAPK8IP3/JIP3 which is essential for MAPK8IP3/JIP3 function in axon elongation. Through binding with PLEKHM2 and ARL8B, directs lysosome movement toward microtubule plus ends. Involved in NK cell-mediated cytotoxicity. Drives the polarization of cytolytic granules and microtubule-organizing centers (MTOCs) toward the immune synapse between effector NK lymphocytes and target cells. This Homo sapiens (Human) protein is Kinesin-1 heavy chain.